A 63-amino-acid polypeptide reads, in one-letter code: Hirudin (63 aa).

Residues 1 to 3 (VVY) are interaction with thrombin active site. Disulfide bonds link C6/C14, C16/C28, and C22/C39. The tract at residues 39–63 (CVTGEGTPGPQSHNDGDFEEPEEYL) is disordered. A glycan (O-linked (GalNAc...) threonine) is linked at T45. The segment at 55–63 (DFEEPEEYL) is interaction with fibrinogen-binding exosite of thrombin. Y62 is modified (sulfotyrosine).

This sequence belongs to the protease inhibitor I14 (hirudin) family.

It is found in the secreted. In terms of biological role, hirudin is a potent thrombin-specific protease inhibitor. It forms a stable non-covalent complex with alpha-thrombin, thereby abolishing its ability to cleave fibrinogen. This is Hirudin from Poecilobdella viridis (Indian freshwater leech).